The sequence spans 282 residues: Pantothenate synthetase (282 aa).

31 to 38 (MGYLHEGH) contributes to the ATP binding site. His38 functions as the Proton donor in the catalytic mechanism. Gln62 is a binding site for (R)-pantoate. Residue Gln62 participates in beta-alanine binding. 148 to 151 (GEKD) is a binding site for ATP. Gln154 serves as a coordination point for (R)-pantoate. ATP-binding positions include Val177 and 185-188 (YSSR).

Belongs to the pantothenate synthetase family. Homodimer.

The protein localises to the cytoplasm. It catalyses the reaction (R)-pantoate + beta-alanine + ATP = (R)-pantothenate + AMP + diphosphate + H(+). It functions in the pathway cofactor biosynthesis; (R)-pantothenate biosynthesis; (R)-pantothenate from (R)-pantoate and beta-alanine: step 1/1. Catalyzes the condensation of pantoate with beta-alanine in an ATP-dependent reaction via a pantoyl-adenylate intermediate. The protein is Pantothenate synthetase of Aquifex aeolicus (strain VF5).